The primary structure comprises 180 residues: Large ribosomal subunit protein uL5 (180 aa).

Belongs to the universal ribosomal protein uL5 family. Part of the 50S ribosomal subunit; part of the 5S rRNA/L5/L18/L25 subcomplex. Contacts the 5S rRNA and the P site tRNA. Forms a bridge to the 30S subunit in the 70S ribosome.

Its function is as follows. This is one of the proteins that bind and probably mediate the attachment of the 5S RNA into the large ribosomal subunit, where it forms part of the central protuberance. In the 70S ribosome it contacts protein S13 of the 30S subunit (bridge B1b), connecting the 2 subunits; this bridge is implicated in subunit movement. Contacts the P site tRNA; the 5S rRNA and some of its associated proteins might help stabilize positioning of ribosome-bound tRNAs. The sequence is that of Large ribosomal subunit protein uL5 from Roseiflexus sp. (strain RS-1).